We begin with the raw amino-acid sequence, 156 residues long: MPRRRVVGQRKILPDPKFHSELLAKFINVIMQDGKKSTAEKIIYKALDVVAEKKSENHLSILEAALDNVRPSVEVKSRRVGGSTYQVPCEVRPVRRNALAMRWLVEAARKRGEKSMALRLAGEMLDASENKGTAVKKREDVHRMAEANKAFAHYRW.

This sequence belongs to the universal ribosomal protein uS7 family. In terms of assembly, part of the 30S ribosomal subunit. Contacts proteins S9 and S11.

In terms of biological role, one of the primary rRNA binding proteins, it binds directly to 16S rRNA where it nucleates assembly of the head domain of the 30S subunit. Is located at the subunit interface close to the decoding center, probably blocks exit of the E-site tRNA. This is Small ribosomal subunit protein uS7 from Shewanella frigidimarina (strain NCIMB 400).